The chain runs to 170 residues: Adenine phosphoribosyltransferase (170 aa).

The protein belongs to the purine/pyrimidine phosphoribosyltransferase family. Homodimer.

The protein localises to the cytoplasm. The catalysed reaction is AMP + diphosphate = 5-phospho-alpha-D-ribose 1-diphosphate + adenine. It functions in the pathway purine metabolism; AMP biosynthesis via salvage pathway; AMP from adenine: step 1/1. Its function is as follows. Catalyzes a salvage reaction resulting in the formation of AMP, that is energically less costly than de novo synthesis. The chain is Adenine phosphoribosyltransferase from Prochlorococcus marinus (strain AS9601).